Here is a 1460-residue protein sequence, read N- to C-terminus: DNA-directed RNA polymerase III subunit RPC1 (1460 aa).

Zn(2+)-binding residues include cysteine 67, cysteine 70, cysteine 77, histidine 80, cysteine 107, cysteine 110, and cysteine 154. Residues aspartate 511, aspartate 513, and aspartate 515 each coordinate Mg(2+). The tract at residues proline 858–glutamate 870 is bridging helix.

It belongs to the RNA polymerase beta' chain family. Component of the RNA polymerase III (Pol III) complex consisting of 17 subunits.

Its subcellular location is the nucleus. It catalyses the reaction RNA(n) + a ribonucleoside 5'-triphosphate = RNA(n+1) + diphosphate. DNA-dependent RNA polymerase catalyzes the transcription of DNA into RNA using the four ribonucleoside triphosphates as substrates. Largest and catalytic core component of RNA polymerase III which synthesizes small RNAs, such as 5S rRNA and tRNAs. Forms the polymerase active center together with the second largest subunit. A single-stranded DNA template strand of the promoter is positioned within the central active site cleft of Pol III. A bridging helix emanates from RPC1 and crosses the cleft near the catalytic site and is thought to promote translocation of Pol III by acting as a ratchet that moves the RNA-DNA hybrid through the active site by switching from straight to bent conformations at each step of nucleotide addition. The polypeptide is DNA-directed RNA polymerase III subunit RPC1 (RPO31) (Saccharomyces cerevisiae (strain ATCC 204508 / S288c) (Baker's yeast)).